The primary structure comprises 183 residues: Ribonuclease M5 (183 aa).

One can recognise a Toprim domain in the interval 6-90 (KEVIVVEGKD…AYISRVSGTK (85 aa)). Positions 12, 59, and 61 each coordinate Mg(2+).

The protein belongs to the ribonuclease M5 family. The cofactor is Mg(2+).

The protein localises to the cytoplasm. It carries out the reaction Endonucleolytic cleavage of RNA, removing 21 and 42 nucleotides, respectively, from the 5'- and 3'-termini of a 5S-rRNA precursor.. Functionally, required for correct processing of both the 5' and 3' ends of 5S rRNA precursor. Cleaves both sides of a double-stranded region yielding mature 5S rRNA in one step. The polypeptide is Ribonuclease M5 (Fusobacterium nucleatum subsp. nucleatum (strain ATCC 25586 / DSM 15643 / BCRC 10681 / CIP 101130 / JCM 8532 / KCTC 2640 / LMG 13131 / VPI 4355)).